Reading from the N-terminus, the 508-residue chain is 3-octaprenyl-4-hydroxybenzoate carboxy-lyase (508 aa).

Mn(2+) is bound at residue N172. Residues 175 to 177 (IYR), 189 to 191 (RWL), and 194 to 195 (RG) each bind prenylated FMN. E238 provides a ligand contact to Mn(2+). D287 functions as the Proton donor in the catalytic mechanism. A disordered region spans residues 483-508 (GEYGIATPPPPPRHSPPSDERGHDDV). The span at 498–508 (PPSDERGHDDV) shows a compositional bias: basic and acidic residues.

Belongs to the UbiD family. In terms of assembly, homohexamer. Prenylated FMN is required as a cofactor. Requires Mn(2+) as cofactor.

Its subcellular location is the cell membrane. It catalyses the reaction a 4-hydroxy-3-(all-trans-polyprenyl)benzoate + H(+) = a 2-(all-trans-polyprenyl)phenol + CO2. The protein operates within cofactor biosynthesis; ubiquinone biosynthesis. Functionally, catalyzes the decarboxylation of 3-octaprenyl-4-hydroxy benzoate to 2-octaprenylphenol, an intermediate step in ubiquinone biosynthesis. The chain is 3-octaprenyl-4-hydroxybenzoate carboxy-lyase from Chromohalobacter salexigens (strain ATCC BAA-138 / DSM 3043 / CIP 106854 / NCIMB 13768 / 1H11).